We begin with the raw amino-acid sequence, 95 residues long: Late cornified envelope protein 7A (95 aa).

This sequence belongs to the LCE family.

Functionally, precursors of the cornified envelope of the stratum corneum. The chain is Late cornified envelope protein 7A from Homo sapiens (Human).